The sequence spans 382 residues: MIQDQANDLLAMKKTFTKSKWKPEEDRILKDYVIQYGDRTWTHVPKRTGLPHNPASCRFRWMNHLKPSLKKGPFTDEEEKRVLQLHAVLGNKWSQMAREFPGRTDNEIKNFWNARRMRLKGKGLPVYPDEVREQAIRTAAQYGVKVELLNAHYSQDSLMAGNVEKPQELNNLALNQCSPYYQSTLANVQPSRNRVMEPETTFPFTGGSAMNEQNPTLLCNPYVESTQEQLPDSHLFGNVTYSSPPMPLIHEVENLELPSFQGFDFHEEPSSFGAEQYNPMLNLEPHNTLVQSPLIGQTPTDFPSSFYDELLDELLESVVNGSLGEIPKTDTSSESQLFQSSLRSHTDATPDIANTTGYVGSNERNTTNDDDWIRLLLDEGFI.

2 consecutive HTH myb-type domains span residues 13 to 69 (KKTF…KPSL) and 70 to 120 (KKGP…MRLK). 2 consecutive DNA-binding regions (H-T-H motif) follow at residues 41–65 (WTHVPKRTGLPHNPASCRFRWMNHL) and 93–116 (WSQMAREFPGRTDNEIKNFWNARR). Positions 326–364 (IPKTDTSSESQLFQSSLRSHTDATPDIANTTGYVGSNER) are disordered. 2 stretches are compositionally biased toward polar residues: residues 329 to 343 (TDTSSESQLFQSSLR) and 352 to 364 (IANTTGYVGSNER).

It localises to the nucleus. The sequence is that of Transcription factor MYB104 (MYB104) from Arabidopsis thaliana (Mouse-ear cress).